The chain runs to 514 residues: ATP synthase subunit alpha (514 aa).

170–177 (GDRQIGKT) lines the ATP pocket.

Belongs to the ATPase alpha/beta chains family. As to quaternary structure, F-type ATPases have 2 components, CF(1) - the catalytic core - and CF(0) - the membrane proton channel. CF(1) has five subunits: alpha(3), beta(3), gamma(1), delta(1), epsilon(1). CF(0) has three main subunits: a(1), b(2) and c(9-12). The alpha and beta chains form an alternating ring which encloses part of the gamma chain. CF(1) is attached to CF(0) by a central stalk formed by the gamma and epsilon chains, while a peripheral stalk is formed by the delta and b chains.

The protein localises to the cell inner membrane. It catalyses the reaction ATP + H2O + 4 H(+)(in) = ADP + phosphate + 5 H(+)(out). Produces ATP from ADP in the presence of a proton gradient across the membrane. The alpha chain is a regulatory subunit. This chain is ATP synthase subunit alpha, found in Stutzerimonas stutzeri (strain A1501) (Pseudomonas stutzeri).